Reading from the N-terminus, the 71-residue chain is UPF0346 protein MGAS2096_Spy0401 (71 aa).

The protein belongs to the UPF0346 family.

The sequence is that of UPF0346 protein MGAS2096_Spy0401 from Streptococcus pyogenes serotype M12 (strain MGAS2096).